The primary structure comprises 367 residues: Alanine racemase (367 aa).

The active-site Proton acceptor; specific for D-alanine is the K34. An N6-(pyridoxal phosphate)lysine modification is found at K34. R131 provides a ligand contact to substrate. Catalysis depends on Y258, which acts as the Proton acceptor; specific for L-alanine. M306 provides a ligand contact to substrate.

It belongs to the alanine racemase family. Pyridoxal 5'-phosphate is required as a cofactor.

It catalyses the reaction L-alanine = D-alanine. It functions in the pathway amino-acid biosynthesis; D-alanine biosynthesis; D-alanine from L-alanine: step 1/1. Its function is as follows. Catalyzes the interconversion of L-alanine and D-alanine. May also act on other amino acids. This Corynebacterium efficiens (strain DSM 44549 / YS-314 / AJ 12310 / JCM 11189 / NBRC 100395) protein is Alanine racemase (alr).